We begin with the raw amino-acid sequence, 1951 residues long: MAQALLVPPGPESFRLFTRESLAAIEKRAAEEKAKKPKKEQDIDDENKPKPNSDLEAGKNLPFIYGDIPPEMVSEPLEDLDPYYVSKKTFVVLNKGKAIFRFSATSALYILTPLNPVRKIAIKILVHSLFSMLIMCTILTNCVFMTLSNPPDWTKNVEYTFTGIYTFESLIKILARGFCLEDFTFLRDPWNWLDFSVIVMAYVTEFVDLGNVSALRTFRVLRALKTISVIPGLKTIVGALIQSVKKLSDVMILTVFCLSVFALIGLQLFMGNLRNKCSQWPPSDSAFETNTTSYFNGTMDSNGTFVNVTMSTFNWKDYIADDSHFYVLDGQKDPLLCGNGSDAGQCPEGYICVKAGRNPNYGYTSFDTFSWAFLSLFRLMTQDYWENLYQLTLRAAGKTYMIFFVLVIFLGSFYLVNLILAVVAMAYEEQNQATLEEAEQKEAEFQQMLEQLKKQQEEAQAVAAASAASRDFSGIGGLGELLESSSEASKLSSKSAKEWRNRRKKRRQREHLEGNHRADGDRFPKSESEDSVKRRSFLLSLDGNPLTGDKKLCSPHQSLLSIRGSLFSPRRNSKTSIFSFRGRAKDVGSENDFADDEHSTFEDSESRRDSLFVPHRPGERRNSNGTTTETEVRKRRLSSYQISMEMLEDSSGRQRSMSIASILTNTMEELEESRQKCPPCWYRFANVFLIWDCCDAWLKVKHLVNLIVMDPFVDLAITICIVLNTLFMAMEHYPMTQQFSSVLTVGNLVFTGIFTAEMVLKIIAMDPYYYFQEGWNIFDGIIVSLSLMELGLANVEGLSVLRSFRLLRVFKLAKSWPTLNMLIKIIGNSVGALGNLTLVLAIIVFIFAVVGMQLFGKSYKECVCKINVDCKLPRWHMNDFFHSFLIVFRVLCGEWIETMWDCMEVAGQTMCLIVFMLVMVIGNLVVLNLFLALLLSSFSSDNLAATDDDNEMNNLQIAVGRMQKGIDFVKNKIRECFRKAFFRKPKVIEIQEGNKIDSCMSNNTGIEISKELNYLKDGNGTTSGVGTGSSVEKYVIDENDYMSFINNPSLTVTVPIAVGESDFENLNTEEFSSESELEESKEKLNATSSSEGSTVDVAPPREGEQAEIEPEEDLKPEACFTEGCIKKFPFCQVSTEEGKGKIWWNLRKTCYSIVEHNWFETFIVFMILLSSGALAFEDIYIEQRKTIKTMLEYADKVFTYIFILEMLLKWVAYGFQTYFTNAWCWLDFLIVDVSLVSLVANALGYSELGAIKSLRTLRALRPLRALSRFEGMRVVVNALVGAIPSIMNVLLVCLIFWLIFSIMGVNLFAGKFYHCVNTTTGNMFEIKEVNNFSDCQALGKQARWKNVKVNFDNVGAGYLALLQVATFKGWMDIMYAAVDSRDVKLQPIYEENLYMYLYFVIFIIFGSFFTLNLFIGVIIDNFNQQKKKFGGQDIFMTEEQKKYYNAMKKLGSKKPQKPIPRPANKFQGMVFDFVTRQVFDISIMILICLNMVTMMVETDDQSKYMTLVLSRINLVFIVLFTGEFLLKLISLRYYYFTIGWNIFDFVVVILSIVGMFLAELIEKYFVSPTLFRVIRLARIGRILRLIKGAKGIRTLLFALMMSLPALFNIGLLLFLVMFIYAIFGMSNFAYVKKEAGIDDMFNFETFGNSMICLFQITTSAGWDGLLAPILNSAPPDCDPDAIHPGSSVKGDCGNPSVGIFFFVSYIIISFLVVVNMYIAVILENFSVATEESAEPLSEDDFEMFYEVWEKFDPDATQFIEFCKLSDFAAALDPPLLIAKPNKVQLIAMDLPMVSGDRIHCLDILFAFTKRVLGESGEMDALRIQMEDRFMASNPSKVSYEPITTTLKRKQEEVSAAIIQRNYRCYLLKQRLKNISSKYDKETIKGRIDLPIKGDMVIDKLNGNSTPEKTDGSSSTTSPPSYDSVTKPDKEKFEKDKPEKEIKGKEVRENQK.

At 1–128 (MAQALLVPPG…KIAIKILVHS (128 aa)) the chain is on the cytoplasmic side. The interval 28–60 (RAAEEKAKKPKKEQDIDDENKPKPNSDLEAGKN) is disordered. The segment covering 46–57 (ENKPKPNSDLEA) has biased composition (basic and acidic residues). The I repeat unit spans residues 110-455 (ILTPLNPVRK…QQMLEQLKKQ (346 aa)). A helical membrane pass occupies residues 129 to 146 (LFSMLIMCTILTNCVFMT). Residues 147 to 152 (LSNPPD) are Extracellular-facing. Residues 153–174 (WTKNVEYTFTGIYTFESLIKIL) traverse the membrane as a helical segment. Over 175 to 188 (ARGFCLEDFTFLRD) the chain is Cytoplasmic. The chain crosses the membrane as a helical span at residues 189-206 (PWNWLDFSVIVMAYVTEF). The Extracellular portion of the chain corresponds to 207–213 (VDLGNVS). A glycan (N-linked (GlcNAc...) asparagine) is linked at asparagine 211. The helical transmembrane segment at 214–235 (ALRTFRVLRALKTISVIPGLKT) threads the bilayer. The Cytoplasmic segment spans residues 236–249 (IVGALIQSVKKLSD). Residues 250–269 (VMILTVFCLSVFALIGLQLF) traverse the membrane as a helical segment. At 270-369 (MGNLRNKCSQ…NYGYTSFDTF (100 aa)) the chain is on the extracellular side. N-linked (GlcNAc...) asparagine glycans are attached at residues asparagine 290, asparagine 296, asparagine 302, asparagine 307, and asparagine 339. An intramembrane region (pore-forming) is located at residues 370-386 (SWAFLSLFRLMTQDYWE). Topologically, residues 387-397 (NLYQLTLRAAG) are extracellular. The chain crosses the membrane as a helical span at residues 398 to 424 (KTYMIFFVLVIFLGSFYLVNLILAVVA). The Cytoplasmic portion of the chain corresponds to 425–712 (MAYEEQNQAT…LVNLIVMDPF (288 aa)). A phosphoserine mark is found at serine 484, serine 485, and serine 486. Disordered regions lie at residues 493–529 (SKSA…SESE) and 587–633 (VGSE…TEVR). The segment covering 500-509 (RNRRKKRRQR) has biased composition (basic residues). 2 stretches are compositionally biased toward basic and acidic residues: residues 510 to 529 (EHLE…SESE) and 596 to 622 (DEHS…ERRN). The II repeat unit spans residues 693 to 965 (CCDAWLKVKH…QIAVGRMQKG (273 aa)). Residues 713-730 (VDLAITICIVLNTLFMAM) form a helical membrane-spanning segment. The Extracellular segment spans residues 731-738 (EHYPMTQQ). The chain crosses the membrane as a helical span at residues 739–763 (FSSVLTVGNLVFTGIFTAEMVLKII). At 764–773 (AMDPYYYFQE) the chain is on the cytoplasmic side. The helical transmembrane segment at 774–793 (GWNIFDGIIVSLSLMELGLA) threads the bilayer. Topologically, residues 794-797 (NVEG) are extracellular. The chain crosses the membrane as a helical span at residues 798-816 (LSVLRSFRLLRVFKLAKSW). Residues 817–834 (PTLNMLIKIIGNSVGALG) are Cytoplasmic-facing. A helical membrane pass occupies residues 835–855 (NLTLVLAIIVFIFAVVGMQLF). At 856–880 (GKSYKECVCKINVDCKLPRWHMNDF) the chain is on the extracellular side. Cysteine 864 and cysteine 870 are oxidised to a cystine. Positions 881 to 896 (FHSFLIVFRVLCGEWI) form an intramembrane region, pore-forming. Over 897-907 (ETMWDCMEVAG) the chain is Extracellular. The cysteines at positions 902 and 911 are disulfide-linked. Residues 908–934 (QTMCLIVFMLVMVIGNLVVLNLFLALL) traverse the membrane as a helical segment. Topologically, residues 935–1156 (LSSFSSDNLA…RKTCYSIVEH (222 aa)) are cytoplasmic. The interval 1068–1112 (TEEFSSESELEESKEKLNATSSSEGSTVDVAPPREGEQAEIEPEE) is disordered. The III repeat unit spans residues 1139–1450 (KGKIWWNLRK…KKYYNAMKKL (312 aa)). Residues 1157–1177 (NWFETFIVFMILLSSGALAFE) form a helical membrane-spanning segment. At 1178-1189 (DIYIEQRKTIKT) the chain is on the extracellular side. Residues 1190–1211 (MLEYADKVFTYIFILEMLLKWV) traverse the membrane as a helical segment. Residues 1212–1217 (AYGFQT) lie on the Cytoplasmic side of the membrane. The helical transmembrane segment at 1218 to 1243 (YFTNAWCWLDFLIVDVSLVSLVANAL) threads the bilayer. At 1244–1252 (GYSELGAIK) the chain is on the extracellular side. A helical membrane pass occupies residues 1253–1271 (SLRTLRALRPLRALSRFEG). The Cytoplasmic segment spans residues 1272 to 1284 (MRVVVNALVGAIP). The helical transmembrane segment at 1285–1307 (SIMNVLLVCLIFWLIFSIMGVNL) threads the bilayer. Over 1308-1353 (FAGKFYHCVNTTTGNMFEIKEVNNFSDCQALGKQARWKNVKVNFDN) the chain is Extracellular. Cysteine 1315 and cysteine 1335 form a disulfide bridge. N-linked (GlcNAc...) asparagine glycosylation is found at asparagine 1317 and asparagine 1331. An intramembrane region (pore-forming) is located at residues 1354–1370 (VGAGYLALLQVATFKGW). Residues 1371 to 1393 (MDIMYAAVDSRDVKLQPIYEENL) lie on the Extracellular side of the membrane. A helical membrane pass occupies residues 1394–1419 (YMYLYFVIFIIFGSFFTLNLFIGVII). Residues 1420–1477 (DNFNQQKKKFGGQDIFMTEEQKKYYNAMKKLGSKKPQKPIPRPANKFQGMVFDFVTRQ) are Cytoplasmic-facing. A Phosphoserine; by PKC modification is found at serine 1452. Residues 1459–1757 (IPRPANKFQG…WEKFDPDATQ (299 aa)) form an IV repeat. Residues 1478 to 1496 (VFDISIMILICLNMVTMMV) form a helical membrane-spanning segment. Residues 1497 to 1504 (ETDDQSKY) are Extracellular-facing. A helical membrane pass occupies residues 1505 to 1528 (MTLVLSRINLVFIVLFTGEFLLKL). Residues 1529-1538 (ISLRYYYFTI) lie on the Cytoplasmic side of the membrane. A helical membrane pass occupies residues 1539–1556 (GWNIFDFVVVILSIVGMF). The Extracellular portion of the chain corresponds to 1557-1568 (LAELIEKYFVSP). A helical transmembrane segment spans residues 1569-1591 (TLFRVIRLARIGRILRLIKGAKG). The Cytoplasmic portion of the chain corresponds to 1592–1604 (IRTLLFALMMSLP). Residues 1605 to 1628 (ALFNIGLLLFLVMFIYAIFGMSNF) form a helical membrane-spanning segment. The Extracellular portion of the chain corresponds to 1629-1650 (AYVKKEAGIDDMFNFETFGNSM). The segment at residues 1651–1663 (ICLFQITTSAGWD) is an intramembrane region (pore-forming). Residues 1664–1695 (GLLAPILNSAPPDCDPDAIHPGSSVKGDCGNP) are Extracellular-facing. A helical membrane pass occupies residues 1696–1721 (SVGIFFFVSYIIISFLVVVNMYIAVI). The Cytoplasmic segment spans residues 1722–1951 (LENFSVATEE…KGKEVRENQK (230 aa)). Positions 1851–1880 (EEVSAAIIQRNYRCYLLKQRLKNISSKYDK) constitute an IQ domain. The tract at residues 1898–1951 (DKLNGNSTPEKTDGSSSTTSPPSYDSVTKPDKEKFEKDKPEKEIKGKEVRENQK) is disordered. Residues 1925–1951 (TKPDKEKFEKDKPEKEIKGKEVRENQK) show a composition bias toward basic and acidic residues.

Belongs to the sodium channel (TC 1.A.1.10) family. Nav1.3/SCN3A subfamily. Heterooligomer of an alpha subunit, SCN3A, and 1 to 3 regulatory beta subunits including SCN1B and SCN2B; disulfide-linked with some beta subunits like SCN2B. Interacts with NEDD4L; could regulate expression of SCN3A at the plasma membrane through ubiquitination-regulated endocytosis. Interacts with the conotoxin GVIIJ. Interacts with the spider beta/delta-theraphotoxin-Pre1a. Interacts with the spider RTX-VII toxin (AC P0DL75). May be ubiquitinated by NEDD4L; which would promote its endocytosis. Post-translationally, phosphorylation at Ser-1452 by PKC in a highly conserved cytoplasmic loop slows inactivation of the sodium channel and reduces peak sodium currents.

It localises to the cell membrane. Its subcellular location is the basal cell membrane. The catalysed reaction is Na(+)(in) = Na(+)(out). Its function is as follows. Pore-forming subunit of Nav1.3, a voltage-gated sodium (Nav) channel that directly mediates the depolarizing phase of action potentials in excitable membranes. Navs, also called VGSCs (voltage-gated sodium channels) or VDSCs (voltage-dependent sodium channels), operate by switching between closed and open conformations depending on the voltage difference across the membrane. In the open conformation they allow Na(+) ions to selectively pass through the pore, along their electrochemical gradient. The influx of Na+ ions provokes membrane depolarization, initiating the propagation of electrical signals throughout cells and tissues. In some secretory cell types, it also participates in cell excitability through membrane depolarization and regulates cells responsiveness to stimuli triggering secretion. For instance, it controls the release of serotonin/5-hydroxytryptamine by enterochromaffin cells and is required for both glucagon- and glucose-induced insulin secretion in pancreatic endocrine cells. In Rattus norvegicus (Rat), this protein is Sodium channel protein type 3 subunit alpha.